Reading from the N-terminus, the 215-residue chain is Large ribosomal subunit protein uL3 (215 aa).

The residue at position 156 (Q156) is an N5-methylglutamine.

Belongs to the universal ribosomal protein uL3 family. In terms of assembly, part of the 50S ribosomal subunit. Forms a cluster with proteins L14 and L19. Post-translationally, methylated by PrmB.

One of the primary rRNA binding proteins, it binds directly near the 3'-end of the 23S rRNA, where it nucleates assembly of the 50S subunit. In Xylella fastidiosa (strain M23), this protein is Large ribosomal subunit protein uL3.